A 128-amino-acid chain; its full sequence is Small ribosomal subunit protein uS13 (128 aa).

The span at 95–118 shows a compositional bias: basic residues; it reads GLPVRGQRTHTNARTRKGPKKGLV. Residues 95 to 128 are disordered; that stretch reads GLPVRGQRTHTNARTRKGPKKGLVRKAAAPAPMA.

It belongs to the universal ribosomal protein uS13 family. Part of the 30S ribosomal subunit. Forms a loose heterodimer with protein S19. Forms two bridges to the 50S subunit in the 70S ribosome.

In terms of biological role, located at the top of the head of the 30S subunit, it contacts several helices of the 16S rRNA. In the 70S ribosome it contacts the 23S rRNA (bridge B1a) and protein L5 of the 50S subunit (bridge B1b), connecting the 2 subunits; these bridges are implicated in subunit movement. Contacts the tRNAs in the A and P-sites. The polypeptide is Small ribosomal subunit protein uS13 (Anaeromyxobacter dehalogenans (strain 2CP-1 / ATCC BAA-258)).